A 165-amino-acid chain; its full sequence is Anterior gradient protein 3 (165 aa).

The N-terminal stretch at 1–20 (MLHSALALCLLLITVSSNLA) is a signal peptide. The Prevents secretion from ER motif lies at 162–165 (QSEL).

This sequence belongs to the AGR family. Interacts with LYPD3 and DAG1 (alphaDAG1). In terms of tissue distribution, expressed in the ciliated cells of the airway epithelium. Not detected in the mucous cells.

It is found in the endoplasmic reticulum. It localises to the cytoplasm. Functionally, required for calcium-mediated regulation of ciliary beat frequency and mucociliary clearance in the airway. Might be involved in the regulation of intracellular calcium in tracheal epithelial cells. The chain is Anterior gradient protein 3 from Mus musculus (Mouse).